Consider the following 106-residue polypeptide: PAT complex subunit Asterix (106 aa).

The disordered stretch occupies residues 1–29; the sequence is MSANNMSDPRRPNKVLRYKPPPSECNPAL. Ser-2 carries the N-acetylserine modification. Over 2 to 32 the chain is Cytoplasmic; that stretch reads SANNMSDPRRPNKVLRYKPPPSECNPALDDP. Residues 33 to 51 form a helical membrane-spanning segment; that stretch reads TPDYMNLLGMIFSMCGLML. Residue Lys-52 is a topological domain, lumenal. A helical membrane pass occupies residues 53–70; the sequence is LKWCAWVAVYCSFISFAN. Topologically, residues 71 to 74 are cytoplasmic; the sequence is SRSS. Residues 75 to 95 form a helical membrane-spanning segment; the sequence is EDTKQMMSSFMLSISAVVMSY. Residues 96–106 are Lumenal-facing; the sequence is LQNPQPMTPPW.

The protein belongs to the Asterix family. In terms of assembly, component of the PAT complex, composed of WDR83OS/Asterix and CCDC47. The PAT complex is part of the multi-pass translocon (MPT) complex, composed of three subcomplexes, the GEL complex (composed of RAB5IF/OPTI and TMCO1), the BOS complex (composed of NCLN/Nicalin, NOMO1 and TMEM147) and the PAT complex (composed of WDR83OS/Asterix and CCDC47). The MPT complex associates with the SEC61 complex.

Its subcellular location is the endoplasmic reticulum membrane. Its function is as follows. Component of the multi-pass translocon (MPT) complex that mediates insertion of multi-pass membrane proteins into the lipid bilayer of membranes. The MPT complex takes over after the SEC61 complex: following membrane insertion of the first few transmembrane segments of proteins by the SEC61 complex, the MPT complex occludes the lateral gate of the SEC61 complex to promote insertion of subsequent transmembrane regions. Within the MPT complex, the PAT subcomplex sequesters any highly polar regions in the transmembrane domains away from the non-polar membrane environment until they can be buried in the interior of the fully assembled protein. Within the PAT subcomplex, WDR83OS/Asterix binds to and redirects the substrate to a location behind the SEC61 complex. This Bos taurus (Bovine) protein is PAT complex subunit Asterix (WDR83OS).